We begin with the raw amino-acid sequence, 287 residues long: AA9 family lytic polysaccharide monooxygenase C (287 aa).

The N-terminal stretch at 1-16 (MKSVLVALATATAVSA) is a signal peptide. His-17 is a Cu(2+) binding site. A glycan (N-linked (GlcNAc...) asparagine) is linked at Asn-22. Disulfide bonds link Cys-77-Cys-230 and Cys-200-Cys-284. Cu(2+) is bound at residue His-114. His-216 and Gln-225 together coordinate O2. Tyr-227 provides a ligand contact to Cu(2+).

The protein belongs to the polysaccharide monooxygenase AA9 family. It depends on Cu(2+) as a cofactor.

It localises to the secreted. It carries out the reaction [(1-&gt;4)-beta-D-glucosyl]n+m + reduced acceptor + O2 = 4-dehydro-beta-D-glucosyl-[(1-&gt;4)-beta-D-glucosyl]n-1 + [(1-&gt;4)-beta-D-glucosyl]m + acceptor + H2O.. Lytic polysaccharide monooxygenase (LPMO) that depolymerizes crystalline and amorphous polysaccharides via the oxidation of scissile alpha- or beta-(1-4)-glycosidic bonds, yielding C1 or C4 oxidation products. Catalysis by LPMOs requires the reduction of the active-site copper from Cu(II) to Cu(I) by a reducing agent and H(2)O(2) or O(2) as a cosubstrate. The chain is AA9 family lytic polysaccharide monooxygenase C from Podospora anserina (strain S / ATCC MYA-4624 / DSM 980 / FGSC 10383) (Pleurage anserina).